The following is a 236-amino-acid chain: Leucyl/phenylalanyl-tRNA--protein transferase (236 aa).

This sequence belongs to the L/F-transferase family.

Its subcellular location is the cytoplasm. The catalysed reaction is N-terminal L-lysyl-[protein] + L-leucyl-tRNA(Leu) = N-terminal L-leucyl-L-lysyl-[protein] + tRNA(Leu) + H(+). The enzyme catalyses N-terminal L-arginyl-[protein] + L-leucyl-tRNA(Leu) = N-terminal L-leucyl-L-arginyl-[protein] + tRNA(Leu) + H(+). It catalyses the reaction L-phenylalanyl-tRNA(Phe) + an N-terminal L-alpha-aminoacyl-[protein] = an N-terminal L-phenylalanyl-L-alpha-aminoacyl-[protein] + tRNA(Phe). Its function is as follows. Functions in the N-end rule pathway of protein degradation where it conjugates Leu, Phe and, less efficiently, Met from aminoacyl-tRNAs to the N-termini of proteins containing an N-terminal arginine or lysine. The protein is Leucyl/phenylalanyl-tRNA--protein transferase of Shewanella sp. (strain MR-7).